The chain runs to 92 residues: uncharacterized protein (92 aa).

The segment at 1–92 (MSDAAAPAQA…PSPSQQQVAA (92 aa)) is disordered.

This is an uncharacterized protein from Caenorhabditis elegans.